The following is a 316-amino-acid chain: Apolipoprotein E (316 aa).

Positions 1–18 (MKALWAVLVVTLLAGCLA) are cleaved as a signal peptide. A run of 8 repeats spans residues 76–97 (VLME…EQLG), 98–119 (PMAE…SRLG), 120–141 (ADME…TMLG), 142–163 (QSTE…KRLM), 164–185 (RDAE…EGAE), 186–207 (RGVG…QRTA), 208–229 (NLGA…ARIR), and 230–251 (GRLE…EQME). Positions 76–251 (VLMEDTMTEL…RLEEVREQME (176 aa)) are 8 X 22 AA approximate tandem repeats. Position 139 is a methionine sulfoxide (M139). A Phosphoserine modification is found at S143. Residues 154–164 (HLRKLRKRLMR) are LDL and other lipoprotein receptors binding. Residue 158-161 (LRKR) coordinates heparin. A lipid-binding and lipoprotein association region spans residues 206–286 (TANLGAGAGK…GWFEPLVEDM (81 aa)). 225-232 (GARIRGRL) contributes to the heparin binding site. Residues 262–316 (QQMRLQAEIFQARLKGWFEPLVEDMQRQWANLVEKIQASVAANPIPPSSVPQESQ) are homooligomerization. Residues 274–286 (RLKGWFEPLVEDM) form a specificity for association with VLDL region.

Belongs to the apolipoprotein A1/A4/E family. In terms of assembly, homotetramer. May interact with ABCA1; functionally associated with ABCA1 in the biogenesis of HDLs. May interact with APP/A4 amyloid-beta peptide; the interaction is extremely stable in vitro but its physiological significance is unclear. May interact with MAPT. May interact with MAP2. In the cerebrospinal fluid, interacts with secreted SORL1. Interacts with PMEL; this allows the loading of PMEL luminal fragment on ILVs to induce fibril nucleation. APOE exists as multiple glycosylated and sialylated glycoforms within cells and in plasma. The extent of glycosylation and sialylation are tissue and context specific. In terms of processing, glycated in plasma VLDL. Post-translationally, phosphorylated by FAM20C in the extracellular medium.

The protein localises to the secreted. It localises to the extracellular space. Its subcellular location is the extracellular matrix. It is found in the extracellular vesicle. The protein resides in the endosome. The protein localises to the multivesicular body. Functionally, APOE is an apolipoprotein, a protein associating with lipid particles, that mainly functions in lipoprotein-mediated lipid transport between organs via the plasma and interstitial fluids. APOE is a core component of plasma lipoproteins and is involved in their production, conversion and clearance. Apolipoproteins are amphipathic molecules that interact both with lipids of the lipoprotein particle core and the aqueous environment of the plasma. As such, APOE associates with chylomicrons, chylomicron remnants, very low density lipoproteins (VLDL) and intermediate density lipoproteins (IDL) but shows a preferential binding to high-density lipoproteins (HDL). It also binds a wide range of cellular receptors including the LDL receptor/LDLR, the LDL receptor-related proteins LRP1, LRP2 and LRP8 and the very low-density lipoprotein receptor/VLDLR that mediate the cellular uptake of the APOE-containing lipoprotein particles. Finally, APOE also has a heparin-binding activity and binds heparan-sulfate proteoglycans on the surface of cells, a property that supports the capture and the receptor-mediated uptake of APOE-containing lipoproteins by cells. A main function of APOE is to mediate lipoprotein clearance through the uptake of chylomicrons, VLDLs, and HDLs by hepatocytes. APOE is also involved in the biosynthesis by the liver of VLDLs as well as their uptake by peripheral tissues ensuring the delivery of triglycerides and energy storage in muscle, heart and adipose tissues. By participating in the lipoprotein-mediated distribution of lipids among tissues, APOE plays a critical role in plasma and tissues lipid homeostasis. APOE is also involved in two steps of reverse cholesterol transport, the HDLs-mediated transport of cholesterol from peripheral tissues to the liver, and thereby plays an important role in cholesterol homeostasis. First, it is functionally associated with ABCA1 in the biogenesis of HDLs in tissues. Second, it is enriched in circulating HDLs and mediates their uptake by hepatocytes. APOE also plays an important role in lipid transport in the central nervous system, regulating neuron survival and sprouting. The chain is Apolipoprotein E (Apoe) from Onychomys torridus (Southern grasshopper mouse).